The chain runs to 69 residues: Iota-conotoxin LtIIIA (69 aa).

A signal peptide spans Met1–Leu20. Residues Glu21 to Arg52 constitute a propeptide that is removed on maturation. A 4-carboxyglutamate mark is found at Glu54 and Glu57. Cystine bridges form between Cys55–Cys67, Cys56–Cys65, and Cys61–Cys68. Pro58 carries the 4-hydroxyproline modification.

Expressed by the venom duct.

The protein resides in the secreted. Iota-conotoxins bind to voltage-gated sodium channels and act as agonists by shifting the voltage-dependence of activation to more hyperpolarized levels. This toxin enhances tetrodotoxin-sensitive sodium current in rat dorsal root ganglion neurons. In Conus litteratus (Lettered cone), this protein is Iota-conotoxin LtIIIA.